The following is a 322-amino-acid chain: Acetyl-coenzyme A carboxylase carboxyl transferase subunit beta (322 aa).

One can recognise a CoA carboxyltransferase N-terminal domain in the interval 24-293 (LWIKCPDTGQ…PAVEEIAASD (270 aa)).

Belongs to the AccD/PCCB family. In terms of assembly, acetyl-CoA carboxylase is a heterohexamer composed of biotin carboxyl carrier protein (AccB), biotin carboxylase (AccC) and two subunits each of ACCase subunit alpha (AccA) and ACCase subunit beta (AccD).

It is found in the cytoplasm. It carries out the reaction N(6)-carboxybiotinyl-L-lysyl-[protein] + acetyl-CoA = N(6)-biotinyl-L-lysyl-[protein] + malonyl-CoA. The protein operates within lipid metabolism; malonyl-CoA biosynthesis; malonyl-CoA from acetyl-CoA: step 1/1. Functionally, component of the acetyl coenzyme A carboxylase (ACC) complex. Biotin carboxylase (BC) catalyzes the carboxylation of biotin on its carrier protein (BCCP) and then the CO(2) group is transferred by the transcarboxylase to acetyl-CoA to form malonyl-CoA. This is Acetyl-coenzyme A carboxylase carboxyl transferase subunit beta from Rhodopseudomonas palustris (strain BisB5).